Reading from the N-terminus, the 512-residue chain is Vacuolar protein sorting-associated protein 30 (512 aa).

Residues 294 to 511 are BARA; sequence TNIYNESFRI…LVFCSSKLSL (218 aa).

Belongs to the beclin family. Component of the autophagy-specific VPS34 PI3-kinase complex I composed of VPS15, VPS30, VPS34, ATG14 and ATG38; and of the VPS34 PI3-kinase complex II composed of VPS15, VPS30, VPS34 and VPS38.

It is found in the endosome membrane. The protein resides in the vacuole membrane. It localises to the preautophagosomal structure membrane. Required for cytoplasm to vacuole transport (Cvt), autophagy, nucleophagy, and mitophagy, as a part of the autophagy-specific VPS34 PI3-kinase complex I. This complex is essential to recruit the ATG8-phosphatidylinositol conjugate and the ATG12-ATG5 conjugate to the pre-autophagosomal structure. Also involved in endosome-to-Golgi retrograde transport as part of the VPS34 PI3-kinase complex II. This second complex is required for the endosome-to-Golgi retrieval of PEP1 and KEX2, and the recruitment of VPS5 and VPS7, two components of the retromer complex, to endosomal membranes (probably through the synthesis of a specific pool of phosphatidylinositol 3-phosphate recruiting the retromer to the endosomes). Required for survival and/or proliferation in kidneys but not brain. This chain is Vacuolar protein sorting-associated protein 30, found in Candida glabrata (strain ATCC 2001 / BCRC 20586 / JCM 3761 / NBRC 0622 / NRRL Y-65 / CBS 138) (Yeast).